We begin with the raw amino-acid sequence, 630 residues long: Low affinity heme transporter str3 (630 aa).

A compositionally biased stretch (basic and acidic residues) spans 1 to 26 (MEAKETHSISDHEVELQDAKPEEKSE). Residues 1–51 (MEAKETHSISDHEVELQDAKPEEKSENGNFVFEKAFSSDEEKGSGYNTNET) form a disordered region. The Cytoplasmic portion of the chain corresponds to 1 to 79 (MEAKETHSIS…VRDSIYQNKR (79 aa)). 2 positions are modified to phosphoserine: S10 and S38. Residues 80–100 (GMYLAYAFGIAILACSWASAI) form a helical membrane-spanning segment. At 101 to 120 (QSSTTYSYQVYATASFNRTS) the chain is on the extracellular side. The chain crosses the membrane as a helical span at residues 121–141 (MISTLEIATAIISSVCKPILG). Over 142–154 (KFSDITSRPMTYT) the chain is Cytoplasmic. A helical transmembrane segment spans residues 155–175 (LVLLFYVIGFIVVASSSTISA). Residue Y176 is a topological domain, extracellular. Residues 177–197 (VIGSVFISIGSSGLDYLNTLV) traverse the membrane as a helical segment. Over 198–208 (VGDLTSLKWRG) the chain is Cytoplasmic. The helical transmembrane segment at 209–229 (FMTALLSTPYIATVWFTGFIV) threads the bilayer. Topologically, residues 230–241 (QGIIDSNWRWGY) are extracellular. Residues 242–262 (GMFAIIMPAVMTPAVIILMYL) traverse the membrane as a helical segment. Residues 263–302 (ERQANKDENIKKIINYQTEEKNKNKQSKWQKLWKAVLEVD) lie on the Cytoplasmic side of the membrane. Residues 303 to 323 (LFGLILLGVGWSILLLPFSLT) form a helical membrane-spanning segment. Over 324 to 335 (SYAKNGWKNPSM) the chain is Extracellular. Residues 336-356 (IAMMVVGGVILIAYSGYEMFI) form a helical membrane-spanning segment. Residues 357 to 370 (APYPSCPRRVMNRT) lie on the Cytoplasmic side of the membrane. Residues 371–391 (FITAVIIDFFYYLAGYLQSMY) form a helical membrane-spanning segment. The Extracellular segment spans residues 392-406 (FTTYTWILYDWSYRD). The helical transmembrane segment at 407-427 (WTYFNNTMTIALCVFGVFAGA) threads the bilayer. Residues 428–439 (MHRVFHRYKYLQ) are Cytoplasmic-facing. The chain crosses the membrane as a helical span at residues 440–460 (IIGLVIKIVGYGILIRPNFAA). The Extracellular portion of the chain corresponds to 461-465 (TGKVD). Residues 466-486 (LAWSLILIGMGGSFSVVGSQV) form a helical membrane-spanning segment. Residues 487–502 (SCQASVPHQDLAIASS) are Cytoplasmic-facing. The helical transmembrane segment at 503–523 (LLPLYTNIGGAIGAAIASPIF) threads the bilayer. A heme binding region spans residues 522-576 (IFSNKVPKYLREYLPSSINDTQVYNFYSDSSLIREYPVGTEIRDGAIKAYSRSMF). Residues 524 to 574 (SNKVPKYLREYLPSSINDTQVYNFYSDSSLIREYPVGTEIRDGAIKAYSRS) lie on the Extracellular side of the membrane. A helical membrane pass occupies residues 575–595 (MFFLLVPAVSLSFIPLAAAFW). At 596-630 (QSNFYLGNQQNAVEGDQDHKKKGDKETTQEEKIII) the chain is on the cytoplasmic side. Residues 610-630 (GDQDHKKKGDKETTQEEKIII) are disordered. The span at 611–630 (DQDHKKKGDKETTQEEKIII) shows a compositional bias: basic and acidic residues.

Belongs to the major facilitator superfamily.

It is found in the cell membrane. Functionally, low affinity heme transporter involved in the assimilation of exogenous heme during conditions of low cellular iron. In Schizosaccharomyces pombe (strain 972 / ATCC 24843) (Fission yeast), this protein is Low affinity heme transporter str3.